Consider the following 182-residue polypeptide: Small ribosomal subunit protein uS9 (182 aa).

The protein belongs to the universal ribosomal protein uS9 family.

In Corynebacterium efficiens (strain DSM 44549 / YS-314 / AJ 12310 / JCM 11189 / NBRC 100395), this protein is Small ribosomal subunit protein uS9.